The chain runs to 400 residues: Acetate kinase (400 aa).

Mg(2+) is bound at residue N7. K14 serves as a coordination point for ATP. Residue R90 participates in substrate binding. D147 (proton donor/acceptor) is an active-site residue. Residues 207–211 (HLGNG), 282–284 (DFR), and 331–335 (GIGEN) contribute to the ATP site. Residue E384 participates in Mg(2+) binding.

Belongs to the acetokinase family. Homodimer. Mg(2+) serves as cofactor. Mn(2+) is required as a cofactor.

It is found in the cytoplasm. The enzyme catalyses acetate + ATP = acetyl phosphate + ADP. Its pathway is metabolic intermediate biosynthesis; acetyl-CoA biosynthesis; acetyl-CoA from acetate: step 1/2. In terms of biological role, catalyzes the formation of acetyl phosphate from acetate and ATP. Can also catalyze the reverse reaction. This chain is Acetate kinase, found in Thermoanaerobacterium thermosaccharolyticum (strain ATCC 7956 / DSM 571 / NCIMB 9385 / NCA 3814 / NCTC 13789 / WDCM 00135 / 2032) (Clostridium thermosaccharolyticum).